Here is a 750-residue protein sequence, read N- to C-terminus: Polyribonucleotide nucleotidyltransferase (750 aa).

Residues aspartate 519 and aspartate 525 each contribute to the Mg(2+) site. The KH domain occupies 585-644 (PRVIAVKIPVDKIGEVIGPKGKMINQIQEDTGADISIEDDGTVYIGATNGPSADAARSAI). Residues 656–728 (GERYLGTVVK…DRGKLSLSPV (73 aa)) form the S1 motif domain. A disordered region spans residues 725–750 (LSPVVAEEEGAASEDAPAEAAEESAE). A compositionally biased stretch (acidic residues) spans 730 to 750 (AEEEGAASEDAPAEAAEESAE).

This sequence belongs to the polyribonucleotide nucleotidyltransferase family. Mg(2+) serves as cofactor.

The protein resides in the cytoplasm. It carries out the reaction RNA(n+1) + phosphate = RNA(n) + a ribonucleoside 5'-diphosphate. Its function is as follows. Involved in mRNA degradation. Catalyzes the phosphorolysis of single-stranded polyribonucleotides processively in the 3'- to 5'-direction. The polypeptide is Polyribonucleotide nucleotidyltransferase (Paenarthrobacter aurescens (strain TC1)).